The chain runs to 418 residues: ORC1-type DNA replication protein 2 (418 aa).

Residues 72–76, tyrosine 218, and arginine 230 each bind ATP; that span reads TGKTV.

The protein belongs to the CDC6/cdc18 family.

Involved in regulation of DNA replication. This Sulfurisphaera tokodaii (strain DSM 16993 / JCM 10545 / NBRC 100140 / 7) (Sulfolobus tokodaii) protein is ORC1-type DNA replication protein 2 (cdc6-2).